We begin with the raw amino-acid sequence, 395 residues long: L-methionine gamma-lyase (395 aa).

Pyridoxal 5'-phosphate-binding positions include 56-58 (YTR) and 86-87 (GM). Y111 serves as a coordination point for substrate. Pyridoxal 5'-phosphate is bound at residue 206 to 208 (SAT). K209 is modified (N6-(pyridoxal phosphate)lysine). Substrate is bound at residue R373.

This sequence belongs to the trans-sulfuration enzymes family. L-methionine gamma-lyase subfamily. Homotetramer. The cofactor is pyridoxal 5'-phosphate.

The catalysed reaction is L-methionine + H2O = methanethiol + 2-oxobutanoate + NH4(+). It catalyses the reaction L-homocysteine + H2O = 2-oxobutanoate + hydrogen sulfide + NH4(+) + H(+). It carries out the reaction L-cysteine + H2O = hydrogen sulfide + pyruvate + NH4(+) + H(+). Functionally, catalyzes the alpha,gamma-elimination of L-methionine to produce methanethiol, 2-oxobutanoate and ammonia, and that of L-homocysteine. Can also use L-cysteine as substrate, catalyzing its alpha,beta-elimination; this activity seems to only minimally contribute to the production of hydrogen sulfide (H2S) by F.nucleatum in the oral cavity, which is toxic for a large variety of cells in periodontal regions. This Fusobacterium nucleatum subsp. nucleatum (strain ATCC 25586 / DSM 15643 / BCRC 10681 / CIP 101130 / JCM 8532 / KCTC 2640 / LMG 13131 / VPI 4355) protein is L-methionine gamma-lyase.